The following is a 163-amino-acid chain: Cytosolic iron-sulfur assembly component 2B (163 aa).

Belongs to the MIP18 family. Component of the CIA complex. Component of the MMXD complex, which includes CIAO1, ERCC2, CIAO2B, MMS19 and SLC25A5. Interacts with CIAO1, ERCC2 and MMS19; the interactions are direct. Interacts with KIF4A; the interaction facilitates the transfer of Fe-S clusters to KIF4A to ensure proper localization of KIF4A to the mitotic machinery. Interacts with CCDC117; the interaction is direct.

The protein resides in the nucleus. It is found in the cytoplasm. It localises to the cytoskeleton. Its subcellular location is the spindle. Functionally, component of the cytosolic iron-sulfur protein assembly (CIA) complex, a multiprotein complex that mediates the incorporation of iron-sulfur cluster into extramitochondrial Fe/S proteins. As a CIA complex component and in collaboration with CIAO1 and MMS19, binds to and facilitates the assembly of most cytosolic-nuclear Fe/S proteins. As part of the mitotic spindle-associated MMXD complex it plays a role in chromosome segregation, probably by facilitating iron-sulfur cluster assembly into ERCC2/XPD. Together with MMS19, facilitates the transfer of Fe-S clusters to the motor protein KIF4A, which ensures proper localization of KIF4A to mitotic machinery components to promote the progression of mitosis. This Mus musculus (Mouse) protein is Cytosolic iron-sulfur assembly component 2B.